A 314-amino-acid polypeptide reads, in one-letter code: Mitochondrial translation factor 2 (314 aa).

The segment at 111-136 (ENSSNIYDPSSPPDSPRKQQTHLGTI) is disordered.

Component of the MRH5C complex, composed of mrh5, ppr4, mtf2, and sls1. Proteins mtf2 and sls1 form a subcomplex that serves as a scaffold to bring mrh5 and ppr4 together. The MRH5C complex associates with the small subunit of the mitochondrial ribosome.

Translation activation factor that as part of the MRH5C complex specifically recruits cox1 mRNA to the mitochondrial ribosome for translation initiation. The protein is Mitochondrial translation factor 2 of Schizosaccharomyces pombe (strain 972 / ATCC 24843) (Fission yeast).